The following is a 391-amino-acid chain: Ribonuclease 3-like protein 2 (391 aa).

The Nuclear export signal signature appears at 7–26 (PEYNFPAITRCSLSNSLPHR). In terms of domain architecture, RNase III spans 60–203 (MEAVEKILNY…LAGAVYVDVN (144 aa)). Mg(2+)-binding residues include Glu96, Asp189, and Glu192. DRBM domains follow at residues 218 to 294 (EPIV…KLSE) and 313 to 387 (HAKT…ALRK). Cys240 and Cys322 are oxidised to a cystine. Positions 371–387 (KKAESSSAYHMIRALRK) match the Bipartite nuclear localization motif.

Homodimer; disulfide-linked. Mg(2+) serves as cofactor. The cofactor is Mn(2+). As to expression, expressed in seeds, leaves and flower buds.

It is found in the nucleus. It localises to the cytoplasm. Functionally, ribonuclease that cleaves double-stranded RNA (dsRNA). Required for 3'-external transcribed spacer (ETS) cleavage of the pre-rRNA precursors. May promote the production of 21 nucleotide small interfering RNA (siRNA) during post-transcriptional gene silencing (PTGS). This Arabidopsis thaliana (Mouse-ear cress) protein is Ribonuclease 3-like protein 2 (RTL2).